Reading from the N-terminus, the 1040-residue chain is Vacuolar membrane protease (1040 aa).

Residues 1-9 (MINPISFRP) are Cytoplasmic-facing. A helical transmembrane segment spans residues 10 to 30 (GPVTFWTTLIYLALLIPIVII). The Vacuolar segment spans residues 31 to 405 (NEEPPAAPKT…SFVLFGLRGM (375 aa)). 4 N-linked (GlcNAc...) asparagine glycosylation sites follow: Asn48, Asn117, Asn120, and Asn129. Residues His186 and Asp198 each contribute to the Zn(2+) site. The active-site Proton acceptor is Glu232. Residues Glu233, Glu258, and His331 each coordinate Zn(2+). A helical membrane pass occupies residues 406–426 (FAWSLTLLIATPLILVGITWL). Residues 427-436 (LRNLDKDYFF) lie on the Cytoplasmic side of the membrane. The chain crosses the membrane as a helical span at residues 437–456 (TSTVKTKEHPEYEAVPIGGW). Residues 457-462 (KGFFRW) are Vacuolar-facing. A helical transmembrane segment spans residues 463 to 483 (AMMVSIFYFSFWMIMRGANFV). The Cytoplasmic segment spans residues 484-490 (RPSALHR). A helical membrane pass occupies residues 491 to 511 (GYANLWLFVFGWIVLVAVTAL). The Vacuolar segment spans residues 512–521 (EDRRRIAAGY). The chain crosses the membrane as a helical span at residues 522–542 (IFVFLESAIFLSCLISFVELL). Residues 543–715 (ALPRKSAYAL…YEHEQDWSGH (173 aa)) are Cytoplasmic-facing. The interval 563–680 (HSGYQGYRDS…NGTNDRGRTT (118 aa)) is disordered. Low complexity-rich tracts occupy residues 577–594 (SSGA…PSSP) and 616–626 (APSVAAHSSQP). Residues 636–647 (GRSTSAPIPSTT) are compositionally biased toward polar residues. Residues 650–661 (DEDESEDDDDEA) are compositionally biased toward acidic residues. A helical membrane pass occupies residues 716–736 (LPSWAWFFQFLLLGPFMIILA). The Vacuolar portion of the chain corresponds to 737 to 758 (AQTGLMLTDAVYQTGSDGSKLF). A helical membrane pass occupies residues 759–779 (TPYLMIFFFTLLLILPLTPFI). The Cytoplasmic segment spans residues 780 to 785 (HRVTHH). A helical membrane pass occupies residues 786–806 (IPVFLLVVFIVTLTYNLIAFP). Over 807–1040 (FSANNRYKAF…VEGRKAFKIV (234 aa)) the chain is Vacuolar. An N-linked (GlcNAc...) asparagine glycan is attached at Asn900.

This sequence belongs to the peptidase M28 family. It depends on Zn(2+) as a cofactor.

The protein localises to the vacuole membrane. Its function is as follows. May be involved in vacuolar sorting and osmoregulation. This Sordaria macrospora (strain ATCC MYA-333 / DSM 997 / K(L3346) / K-hell) protein is Vacuolar membrane protease.